Reading from the N-terminus, the 131-residue chain is uncharacterized protein (131 aa).

A signal peptide spans 1–19 (MRESLFIIFFQFVCHSSNS). 2 helical membrane-spanning segments follow: residues 33–53 (PLLT…ALFF) and 111–131 (VSFN…FFLF).

The protein resides in the membrane. This is an uncharacterized protein from Saccharomyces cerevisiae (strain ATCC 204508 / S288c) (Baker's yeast).